The following is a 176-amino-acid chain: Nucleoside triphosphate/diphosphate phosphatase (176 aa).

Catalysis depends on R23, which acts as the Proton donor. The Mg(2+) site is built by N87, D103, D105, D107, D120, and E123.

Belongs to the Ntdp family. Mg(2+) is required as a cofactor.

It carries out the reaction a ribonucleoside 5'-triphosphate + H2O = a ribonucleoside 5'-diphosphate + phosphate + H(+). It catalyses the reaction a ribonucleoside 5'-diphosphate + H2O = a ribonucleoside 5'-phosphate + phosphate + H(+). Functionally, has nucleoside phosphatase activity towards nucleoside triphosphates and nucleoside diphosphates. This is Nucleoside triphosphate/diphosphate phosphatase from Bacillus pumilus (strain SAFR-032).